Reading from the N-terminus, the 1072-residue chain is 5'-3' exoribonuclease 2 (1072 aa).

Residues 118–144 (RRFRAAREAMEKEEDKQKFVELLKKQN) adopt a coiled-coil conformation. The segment at 269 to 286 (RLCKICGQKGHDAMNCKG) adopts a CCHC-type zinc-finger fold. Basic and acidic residues predominate over residues 414 to 435 (KETEDRREAGFKRRKLADEARQ). 4 disordered regions span residues 414–459 (KETE…GFSF), 509–577 (QGTS…AEPT), 865–911 (ASRS…GGGG), and 943–1072 (GGGY…RGYR). Over residues 518–543 (AESTETPAETAAAAPATEEQAAPPAA) the composition is skewed to low complexity. Over residues 892-911 (GPGGGQQGGRGRGGYQGGGG) the composition is skewed to gly residues. Residues 955–967 (GPPPGWQPPPPPG) are compositionally biased toward pro residues. 3 stretches are compositionally biased toward gly residues: residues 983 to 1000 (AYGGAPGGAGYGGYGSSR), 1025 to 1036 (YGQGGSRGGYQG), and 1056 to 1072 (GYRGGGYRGGGDNRGYR).

The protein belongs to the 5'-3' exonuclease family. XRN2/RAT1 subfamily. Interacts with rai1; the interaction is direct, stabilizes exr-1 protein structure and may stimulate its exoribonuclease activity. The interaction also stimulates rai1 pyrophosphohydrolase activity, probably by recruiting it to mRNA substrates.

It is found in the nucleus. Functionally, possesses 5'-&gt;3' exoribonuclease activity. Required for the processing of nuclear mRNA and rRNA precursors. May promote the termination of transcription by RNA polymerase II. Essential for vegetative cell growth and chromosome segregation. The protein is 5'-3' exoribonuclease 2 (exr-1) of Neurospora crassa (strain ATCC 24698 / 74-OR23-1A / CBS 708.71 / DSM 1257 / FGSC 987).